Here is a 684-residue protein sequence, read N- to C-terminus: Methionine--tRNA ligase (684 aa).

Residues 15–25 carry the 'HIGH' region motif; sequence PYANGAIHLGH. Zn(2+) is bound by residues C146, C149, C159, and C162. Residues 331–335 carry the 'KMSKS' region motif; it reads KMSKS. Position 334 (K334) interacts with ATP. Positions 582-684 constitute a tRNA-binding domain; that stretch reads DFAKLDLRVA…SGVTAGMQVR (103 aa).

The protein belongs to the class-I aminoacyl-tRNA synthetase family. MetG type 1 subfamily. In terms of assembly, homodimer. Zn(2+) is required as a cofactor.

It is found in the cytoplasm. It carries out the reaction tRNA(Met) + L-methionine + ATP = L-methionyl-tRNA(Met) + AMP + diphosphate. Functionally, is required not only for elongation of protein synthesis but also for the initiation of all mRNA translation through initiator tRNA(fMet) aminoacylation. This Glaesserella parasuis serovar 5 (strain SH0165) (Haemophilus parasuis) protein is Methionine--tRNA ligase.